The following is a 257-amino-acid chain: Beta-fibrinogenase mucrofibrase-3 (257 aa).

Positions 1–18 are cleaved as a signal peptide; sequence MVLIRVLANLLILQLSYA. Residues 19 to 24 constitute a propeptide that is removed on maturation; the sequence is QKSSEL. One can recognise a Peptidase S1 domain in the interval 25-248; the sequence is VIGGDECNIN…HLDWIKGIIA (224 aa). Cystine bridges form between C31–C162, C49–C65, C97–C255, C141–C209, C173–C188, and C199–C224. Catalysis depends on charge relay system residues H64 and D109. S203 acts as the Charge relay system in catalysis.

Belongs to the peptidase S1 family. Snake venom subfamily. In terms of assembly, monomer. Expressed by the venom gland.

The protein resides in the secreted. Its function is as follows. Snake venom serine protease with fibrinogenolytic activities. Cleaves beta-chain of fibrinogen (FGB) efficiently and shows relatively lower activity on alpha-chain. The protein is Beta-fibrinogenase mucrofibrase-3 of Protobothrops mucrosquamatus (Taiwan habu).